Here is a 129-residue protein sequence, read N- to C-terminus: S-adenosylmethionine decarboxylase proenzyme (129 aa).

Catalysis depends on Ser-63, which acts as the Schiff-base intermediate with substrate; via pyruvic acid. Pyruvic acid (Ser); by autocatalysis is present on Ser-63. Residue His-68 is the Proton acceptor; for processing activity of the active site. Cys-83 serves as the catalytic Proton donor; for catalytic activity.

The protein belongs to the prokaryotic AdoMetDC family. Type 1 subfamily. In terms of assembly, heterotetramer of two alpha and two beta chains arranged as a dimer of alpha/beta heterodimers. The cofactor is pyruvate. Is synthesized initially as an inactive proenzyme. Formation of the active enzyme involves a self-maturation process in which the active site pyruvoyl group is generated from an internal serine residue via an autocatalytic post-translational modification. Two non-identical subunits are generated from the proenzyme in this reaction, and the pyruvate is formed at the N-terminus of the alpha chain, which is derived from the carboxyl end of the proenzyme. The post-translation cleavage follows an unusual pathway, termed non-hydrolytic serinolysis, in which the side chain hydroxyl group of the serine supplies its oxygen atom to form the C-terminus of the beta chain, while the remainder of the serine residue undergoes an oxidative deamination to produce ammonia and the pyruvoyl group blocking the N-terminus of the alpha chain.

It carries out the reaction S-adenosyl-L-methionine + H(+) = S-adenosyl 3-(methylsulfanyl)propylamine + CO2. It functions in the pathway amine and polyamine biosynthesis; S-adenosylmethioninamine biosynthesis; S-adenosylmethioninamine from S-adenosyl-L-methionine: step 1/1. Catalyzes the decarboxylation of S-adenosylmethionine to S-adenosylmethioninamine (dcAdoMet), the propylamine donor required for the synthesis of the polyamines spermine and spermidine from the diamine putrescine. This is S-adenosylmethionine decarboxylase proenzyme from Shouchella clausii (strain KSM-K16) (Alkalihalobacillus clausii).